A 1379-amino-acid polypeptide reads, in one-letter code: Protein three rows (1379 aa).

The interval 1031-1037 (VEPIRKQ) is separase cleavage-site. 3 disordered regions span residues 1206-1231 (PEDK…KQSA), 1248-1309 (PSAT…ATSK), and 1328-1379 (ITTS…RHRH). The span at 1213–1228 (ATGSVSAVKNTASKVK) shows a compositional bias: polar residues. Residues 1248 to 1267 (PSATSCSSSGGSGTENTPPS) are compositionally biased toward low complexity.

Interacts with pim and Sse. Cleavage of thr contributes to inactivation of Sse. In terms of processing, proteolytically cleaved after the metaphase-to-anaphase transition, C-terminal cleavage product is degraded. Cleavage can only proceed within complexes that contain active Sse. In terms of tissue distribution, during embryogenesis, expressed in Malpighian tubule buds, and epithelia of foregut and hindgut.

The protein resides in the cytoplasm. Functionally, required specifically for chromosome disjunction during all mitoses; maternally provided protein is sufficient until mitosis 14 then zygotic protein is required. Involved in formation and/or maintenance of epithelial structures: bud extension during Malpighian tubule development, and foregut and hindgut morphogenesis. This is Protein three rows (thr) from Drosophila melanogaster (Fruit fly).